The following is a 347-amino-acid chain: Protein RecA (347 aa).

An ATP-binding site is contributed by 67–74 (GPESSGKT).

The protein belongs to the RecA family.

The protein localises to the cytoplasm. Its function is as follows. Can catalyze the hydrolysis of ATP in the presence of single-stranded DNA, the ATP-dependent uptake of single-stranded DNA by duplex DNA, and the ATP-dependent hybridization of homologous single-stranded DNAs. It interacts with LexA causing its activation and leading to its autocatalytic cleavage. The sequence is that of Protein RecA from Helicobacter acinonychis (strain Sheeba).